A 344-amino-acid chain; its full sequence is Histone-lysine N-methyltransferase, H3 lysine-9 specific KMT1 (344 aa).

The 96-residue stretch at 79–174 (SGCSCAKDSE…DCPNRVVERG (96 aa)) folds into the Pre-SET domain. The Zn(2+) site is built by Cys81, Cys83, Cys89, Cys94, Cys96, Cys156, Cys160, Cys162, Cys166, and Cys272. The region spanning 177 to 312 (IPLEIFRTPD…EGEELTFDYV (136 aa)) is the SET domain. Tyr311 contacts S-adenosyl-L-methionine. The region spanning 328 to 344 (HMTRCLCGSKKCRKFLW) is the Post-SET domain. Residues Cys332, Cys334, and Cys339 each contribute to the Zn(2+) site.

The protein belongs to the class V-like SAM-binding methyltransferase superfamily.

It localises to the chromosome. It carries out the reaction L-lysyl(9)-[histone H3] + 3 S-adenosyl-L-methionine = N(6),N(6),N(6)-trimethyl-L-lysyl(9)-[histone H3] + 3 S-adenosyl-L-homocysteine + 3 H(+). Functionally, histone methyltransferase that specifically trimethylates histone H3 to form H3K9me3. H3K9me3 marks chromatin regions for DNA methylation. Plays a key role in the regulation of the biosynthesis of the gamma-pyrones fusapyrone (FPY) and deoxyfusapyrone (dFPY). This Fusarium mangiferae (Mango malformation disease fungus) protein is Histone-lysine N-methyltransferase, H3 lysine-9 specific KMT1.